Here is a 56-residue protein sequence, read N- to C-terminus: Large ribosomal subunit protein bL33 (56 aa).

It belongs to the bacterial ribosomal protein bL33 family.

This is Large ribosomal subunit protein bL33 from Nocardioides sp. (strain ATCC BAA-499 / JS614).